The primary structure comprises 260 residues: Putative hydro-lyase Bmul_5125/BMULJ_03391 (260 aa).

This sequence belongs to the D-glutamate cyclase family.

The polypeptide is Putative hydro-lyase Bmul_5125/BMULJ_03391 (Burkholderia multivorans (strain ATCC 17616 / 249)).